The following is a 299-amino-acid chain: Probable lipid kinase YegS (299 aa).

The DAGKc domain occupies 2–133; the sequence is ANFPASLLIL…IDMARVNDKT (132 aa). Residues Thr-40, 66–72, and Thr-95 each bind ATP; that span reads GDGTINE. Mg(2+) contacts are provided by Leu-215, Asp-218, and Leu-220. Catalysis depends on Glu-271, which acts as the Proton acceptor.

It belongs to the diacylglycerol/lipid kinase family. YegS lipid kinase subfamily. Requires Mg(2+) as cofactor. Ca(2+) serves as cofactor.

The protein resides in the cytoplasm. Its function is as follows. Probably phosphorylates lipids; the in vivo substrate is unknown. This Salmonella paratyphi A (strain ATCC 9150 / SARB42) protein is Probable lipid kinase YegS.